The following is a 190-amino-acid chain: Large ribosomal subunit protein bL9 (190 aa).

The protein belongs to the bacterial ribosomal protein bL9 family.

Functionally, binds to the 23S rRNA. The protein is Large ribosomal subunit protein bL9 of Methylorubrum extorquens (strain CM4 / NCIMB 13688) (Methylobacterium extorquens).